Reading from the N-terminus, the 392-residue chain is 2-oxoisovalerate dehydrogenase subunit beta, mitochondrial (392 aa).

Residues 1-50 constitute a mitochondrion transit peptide; the sequence is MAAVAAFAGWLLRLRAAGADGPWRRLCGAGLSRGFLQSASAYGAAAQRRQ. Tyrosine 152 contributes to the thiamine diphosphate binding site. Positions 178, 180, 181, 228, and 231 each coordinate K(+). Lysine 232 carries the N6-acetyllysine modification. Residue asparagine 233 coordinates K(+). An N6-acetyllysine modification is found at lysine 241.

As to quaternary structure, heterotetramer of 2 alpha/BCKDHA and 2 beta chains/BCKDHB that forms the branched-chain alpha-keto acid decarboxylase (E1) component of the BCKD complex. The branched-chain alpha-ketoacid dehydrogenase is a large complex composed of three major building blocks E1, E2 and E3. It is organized around E2, a 24-meric cubic core composed of DBT, to which are associated 6 to 12 copies of E1, and approximately 6 copies of the dehydrogenase E3, a DLD dimer. It depends on thiamine diphosphate as a cofactor.

The protein localises to the mitochondrion matrix. It catalyses the reaction N(6)-[(R)-lipoyl]-L-lysyl-[protein] + 3-methyl-2-oxobutanoate + H(+) = N(6)-[(R)-S(8)-2-methylpropanoyldihydrolipoyl]-L-lysyl-[protein] + CO2. In terms of biological role, together with BCKDHA forms the heterotetrameric E1 subunit of the mitochondrial branched-chain alpha-ketoacid dehydrogenase (BCKD) complex. The BCKD complex catalyzes the multi-step oxidative decarboxylation of alpha-ketoacids derived from the branched-chain amino-acids valine, leucine and isoleucine producing CO2 and acyl-CoA which is subsequently utilized to produce energy. The E1 subunit catalyzes the first step with the decarboxylation of the alpha-ketoacid forming an enzyme-product intermediate. A reductive acylation mediated by the lipoylamide cofactor of E2 extracts the acyl group from the E1 active site for the next step of the reaction. This is 2-oxoisovalerate dehydrogenase subunit beta, mitochondrial (BCKDHB) from Bos taurus (Bovine).